Reading from the N-terminus, the 109-residue chain is Flagellar hook-basal body complex protein FliE (109 aa).

The tract at residues 1–38 (MQAIHNDKSLLSPFSELNTDNRTKREESGSTFKEQKGG) is disordered. A compositionally biased stretch (basic and acidic residues) spans 19-38 (TDNRTKREESGSTFKEQKGG).

Belongs to the FliE family.

Its subcellular location is the bacterial flagellum basal body. This Helicobacter pylori (strain P12) protein is Flagellar hook-basal body complex protein FliE.